We begin with the raw amino-acid sequence, 206 residues long: Ras-related protein Ral-A (206 aa).

Position 21–28 (21–28 (GSGGVGKS)) interacts with GTP. The Effector region signature appears at 43-51 (YEPTKADSY). Residues 68 to 72 (DTAGQ) and 127 to 130 (NKSD) contribute to the GTP site. At S194 the chain carries Phosphoserine. C203 is modified (cysteine methyl ester). Residue C203 is the site of S-geranylgeranyl cysteine attachment. Residues 204–206 (CIL) constitute a propeptide, removed in mature form.

The protein belongs to the small GTPase superfamily. Ras family. Interacts (via effector domain) with RALBP1; during mitosis, recruits RALBP1 to the mitochondrion where it promotes DNM1L phosphorylation and mitochondrial fission. Interacts with EXOC2/Sec5 and EXOC8/Exo84; binding to EXOC2 and EXOC8 is mutually exclusive. Interacts with Clostridium exoenzyme C3. Interacts with RALGPS1. Interacts with LPAR1 and LPAR2. Interacts with GRK2 in response to LPAR1 activation. RALA and GRK2 binding to LPAR1 is mutually exclusive. Interacts with CDC42. Post-translationally, prenylation is essential for membrane localization. In terms of processing, phosphorylated. Phosphorylation at Ser-194 by AURKA/Aurora kinase A, during mitosis, induces RALA localization to the mitochondrion where it regulates mitochondrial fission.

The protein localises to the cell membrane. Its subcellular location is the cleavage furrow. It localises to the midbody. It is found in the midbody ring. The protein resides in the mitochondrion. It carries out the reaction GTP + H2O = GDP + phosphate + H(+). Alternates between an inactive form bound to GDP and an active form bound to GTP. Activated by a guanine nucleotide-exchange factor (GEF) and inactivated by a GTPase-activating protein (GAP). Functionally, multifunctional GTPase involved in a variety of cellular processes including gene expression, cell migration, cell proliferation, oncogenic transformation and membrane trafficking. Accomplishes its multiple functions by interacting with distinct downstream effectors. Acts as a GTP sensor for GTP-dependent exocytosis of dense core vesicles. Key regulator of LPAR1 signaling and competes with GRK2 for binding to LPAR1 thus affecting the signaling properties of the receptor. Required for anchorage-independent proliferation of transformed cells. The RALA-exocyst complex regulates integrin-dependent membrane raft exocytosis and growth signaling. During mitosis, supports the stabilization and elongation of the intracellular bridge between dividing cells. Cooperates with EXOC2 to recruit other components of the exocyst to the early midbody. During mitosis, also controls mitochondrial fission by recruiting to the mitochondrion RALBP1, which mediates the phosphorylation and activation of DNM1L by the mitotic kinase cyclin B-CDK1. This Mus musculus (Mouse) protein is Ras-related protein Ral-A (Rala).